We begin with the raw amino-acid sequence, 123 residues long: MAKIKARDLRGKKKEELLKQLEDLKVELSQLRVAKVTGGAASKLSKIRVVRKSIARVLTVINQTQKENLRKFYKGKKYKPLDLRPKKTRAMRRRLNKHEENLKTKKQQRKERLYPLRKYAVKA.

The residue at position 19 (Lys19) is an N6-acetyllysine. Lys25 is covalently cross-linked (Glycyl lysine isopeptide (Lys-Gly) (interchain with G-Cter in SUMO2)). Phosphoserine is present on Ser29. Lys43 is modified (N6-acetyllysine). The tract at residues 95–114 (LNKHEENLKTKKQQRKERLY) is disordered.

It belongs to the universal ribosomal protein uL29 family. As to quaternary structure, component of the large ribosomal subunit.

It localises to the cytoplasm. Component of the large ribosomal subunit. The ribosome is a large ribonucleoprotein complex responsible for the synthesis of proteins in the cell. This chain is Large ribosomal subunit protein uL29 (RPL35), found in Bos taurus (Bovine).